Consider the following 278-residue polypeptide: Undecaprenyl-diphosphatase (278 aa).

Transmembrane regions (helical) follow at residues 49–69 (ANTF…VVFW), 97–117 (HVLI…DFID), 120–140 (LFSI…MIAA), 197–217 (ADFT…LSLV), 226–246 (GDLG…LLSI), and 258–278 (LVPF…IVYM).

The protein belongs to the UppP family.

It is found in the cell membrane. It catalyses the reaction di-trans,octa-cis-undecaprenyl diphosphate + H2O = di-trans,octa-cis-undecaprenyl phosphate + phosphate + H(+). Functionally, catalyzes the dephosphorylation of undecaprenyl diphosphate (UPP). Confers resistance to bacitracin. The polypeptide is Undecaprenyl-diphosphatase (Exiguobacterium sibiricum (strain DSM 17290 / CCUG 55495 / CIP 109462 / JCM 13490 / 255-15)).